The chain runs to 264 residues: S-adenosylmethionine decarboxylase proenzyme (264 aa).

S112 (schiff-base intermediate with substrate; via pyruvic acid) is an active-site residue. S112 carries the pyruvic acid (Ser); by autocatalysis modification. H117 (proton acceptor; for processing activity) is an active-site residue. The active-site Proton donor; for catalytic activity is C140.

The protein belongs to the prokaryotic AdoMetDC family. Type 2 subfamily. As to quaternary structure, heterooctamer of four alpha and four beta chains arranged as a tetramer of alpha/beta heterodimers. It depends on pyruvate as a cofactor. Is synthesized initially as an inactive proenzyme. Formation of the active enzyme involves a self-maturation process in which the active site pyruvoyl group is generated from an internal serine residue via an autocatalytic post-translational modification. Two non-identical subunits are generated from the proenzyme in this reaction, and the pyruvate is formed at the N-terminus of the alpha chain, which is derived from the carboxyl end of the proenzyme. The post-translation cleavage follows an unusual pathway, termed non-hydrolytic serinolysis, in which the side chain hydroxyl group of the serine supplies its oxygen atom to form the C-terminus of the beta chain, while the remainder of the serine residue undergoes an oxidative deamination to produce ammonia and the pyruvoyl group blocking the N-terminus of the alpha chain.

It carries out the reaction S-adenosyl-L-methionine + H(+) = S-adenosyl 3-(methylsulfanyl)propylamine + CO2. Its pathway is amine and polyamine biosynthesis; S-adenosylmethioninamine biosynthesis; S-adenosylmethioninamine from S-adenosyl-L-methionine: step 1/1. Functionally, catalyzes the decarboxylation of S-adenosylmethionine to S-adenosylmethioninamine (dcAdoMet), the propylamine donor required for the synthesis of the polyamines spermine and spermidine from the diamine putrescine. This Shigella dysenteriae serotype 1 (strain Sd197) protein is S-adenosylmethionine decarboxylase proenzyme.